Reading from the N-terminus, the 359-residue chain is Serine/threonine-protein phosphatase 2A activator 2 (359 aa).

Belongs to the PTPA-type PPIase family.

The protein localises to the cytoplasm. It catalyses the reaction [protein]-peptidylproline (omega=180) = [protein]-peptidylproline (omega=0). Functionally, PPIases accelerate the folding of proteins. It catalyzes the cis-trans isomerization of proline imidic peptide bonds in oligopeptides. Acts as a regulatory subunit for PP2A-like phosphatases modulating their activity or substrate specificity, probably by inducing a conformational change in the catalytic subunit, a direct target of the PPIase. Can reactivate inactive phosphatase PP2A-phosphatase methylesterase complexes (PP2Ai) in presence of ATP and Mg(2+) by dissociating the inactive form from the complex. The polypeptide is Serine/threonine-protein phosphatase 2A activator 2 (RRD2) (Eremothecium gossypii (strain ATCC 10895 / CBS 109.51 / FGSC 9923 / NRRL Y-1056) (Yeast)).